Reading from the N-terminus, the 496-residue chain is Transcription termination factor MTERF9, chloroplastic (496 aa).

The N-terminal 44 residues, 1 to 44, are a transit peptide targeting the chloroplast; that stretch reads MAGFSLYCFKNPRILFTLPSESPLFVLGSDKCSPATRRPSRKTR. Disordered stretches follow at residues 57-90 and 102-155; these read IINPKKKSRYGQTLSPYDSDEDDDDDDDDDDDDW and YEKK…SWRL. Positions 74 to 90 are enriched in acidic residues; it reads DSDEDDDDDDDDDDDDW. The span at 105–123 shows a compositional bias: basic residues; it reads KKPKSHKQTIAKKSVKKGI. The segment covering 146 to 155 has biased composition (basic and acidic residues); sequence SEKKKESWRL.

The protein belongs to the mTERF family.

The protein localises to the plastid. The protein resides in the chloroplast. Functionally, transcription termination factor required for processing and steady-state levels of plastid transcripts. May play a role in response to abiotic stresses. This Arabidopsis thaliana (Mouse-ear cress) protein is Transcription termination factor MTERF9, chloroplastic.